A 365-amino-acid chain; its full sequence is Iron-sulfur cluster assembly protein SufC (365 aa).

Residues 118–364 enclose the ABC transporter domain; it reads LEINDLHAIE…ESDGYAQFVE (247 aa). 152–159 serves as a coordination point for ATP; the sequence is GRNGSGKS.

It belongs to the ABC transporter superfamily. Ycf16 family. As to quaternary structure, component of a complex composed of SufB, SufC and SufD in a stoichiometric ratio of 1:2:1. Interacts with SufB. Interacts with SufD; the interaction enhances the ATPase activity of SufC.

Its subcellular location is the plastid. It is found in the apicoplast. It catalyses the reaction ATP + H2O = ADP + phosphate + H(+). It participates in cofactor biosynthesis; iron-sulfur cluster biosynthesis. In terms of biological role, participates in the sulfur mobilization (SUF) pathway for iron-sulfur (Fe-S) cluster biogenesis. As part of a complex consisting of SufB-SufC(2)-SufD, involved in assembly of [4Fe-4S] clusters. Exhibits ATPase activity. The sequence is that of Iron-sulfur cluster assembly protein SufC from Plasmodium berghei (strain Anka).